Reading from the N-terminus, the 339-residue chain is Anthranilate phosphoribosyltransferase (339 aa).

5-phospho-alpha-D-ribose 1-diphosphate contacts are provided by residues glycine 81, 84–85 (GD), serine 89, 91–94 (NVSS), 109–117 (KHGNRALSS), and alanine 121. Anthranilate is bound at residue glycine 81. Position 93 (serine 93) interacts with Mg(2+). Asparagine 112 serves as a coordination point for anthranilate. Arginine 167 provides a ligand contact to anthranilate. Mg(2+) is bound by residues aspartate 225 and glutamate 226.

It belongs to the anthranilate phosphoribosyltransferase family. In terms of assembly, homodimer. Mg(2+) is required as a cofactor.

The enzyme catalyses N-(5-phospho-beta-D-ribosyl)anthranilate + diphosphate = 5-phospho-alpha-D-ribose 1-diphosphate + anthranilate. It functions in the pathway amino-acid biosynthesis; L-tryptophan biosynthesis; L-tryptophan from chorismate: step 2/5. Functionally, catalyzes the transfer of the phosphoribosyl group of 5-phosphorylribose-1-pyrophosphate (PRPP) to anthranilate to yield N-(5'-phosphoribosyl)-anthranilate (PRA). This is Anthranilate phosphoribosyltransferase from Brucella ovis (strain ATCC 25840 / 63/290 / NCTC 10512).